Reading from the N-terminus, the 709-residue chain is ATP-dependent zinc metalloprotease FtsH (709 aa).

At 1 to 25 (MKKNKGLNEATTSEKPQFPKRTAWK) the chain is on the cytoplasmic side. Residues 26–46 (IFWWVVILAIIIGILVYILMP) traverse the membrane as a helical segment. The Extracellular segment spans residues 47–171 (RATTAVIEKW…FVAPDTRARD (125 aa)). The helical transmembrane segment at 172–192 (VLNIFFGLLPIIIFVIFFLLF) threads the bilayer. The Cytoplasmic segment spans residues 193-709 (WRSARGISGG…DTEKDSETNS (517 aa)). Residue 268–275 (GPPGTGKT) participates in ATP binding. Position 490 (His490) interacts with Zn(2+). Glu491 is an active-site residue. His494 and Asp569 together coordinate Zn(2+). Positions 673 to 709 (ILAQKQEQQAKQKAEAKEAKLNKKTEKDTEKDSETNS) are disordered. The segment covering 680-709 (QQAKQKAEAKEAKLNKKTEKDTEKDSETNS) has biased composition (basic and acidic residues).

The protein in the central section; belongs to the AAA ATPase family. In the C-terminal section; belongs to the peptidase M41 family. Homohexamer. It depends on Zn(2+) as a cofactor.

The protein localises to the cell membrane. Acts as a processive, ATP-dependent zinc metallopeptidase for both cytoplasmic and membrane proteins. Plays a role in the quality control of integral membrane proteins. This chain is ATP-dependent zinc metalloprotease FtsH, found in Mycoplasma pneumoniae (strain ATCC 29342 / M129 / Subtype 1) (Mycoplasmoides pneumoniae).